A 149-amino-acid polypeptide reads, in one-letter code: Gamma-glutamylaminecyclotransferase (149 aa).

7–10 (YGTL) serves as a coordination point for substrate. Glu-82 functions as the Proton acceptor in the catalytic mechanism.

The protein belongs to the gamma-glutamylcyclotransferase family. Monomer.

It catalyses the reaction epsilon-(gamma-L-glutamyl)-L-lysine = 5-oxo-L-proline + L-lysine. Its function is as follows. Contributes to degradation of proteins cross-linked by transglutaminases by degrading the cross-link between a lysine and a glutamic acid residue. Catalyzes the formation of 5-oxo-L-proline from L-gamma-glutamyl-L-epsilon-lysine. Inactive with L-gamma-glutamyl-alpha-amino acid substrates such as L-gamma-glutamyl-L-alpha-cysteine and L-gamma-glutamyl-L-alpha-alanine. The polypeptide is Gamma-glutamylaminecyclotransferase (Ggact) (Rattus norvegicus (Rat)).